The sequence spans 464 residues: Capsule biosynthesis protein CapB (464 aa).

The chain crosses the membrane as a helical span at residues 65–85 (LIQMIFIIGICTVFLIIYGIW).

The protein localises to the cell membrane. The protein operates within capsule biogenesis; capsule polysaccharide biosynthesis. Functionally, essential for the synthesis of the polyglutamate capsule of B.anthracis which is one of the principal virulence factors during anthrax infection. May form a polyglutamyl synthetase complex together with proteins CapA and CapC. The protein is Capsule biosynthesis protein CapB (capB) of Bacillus anthracis.